The chain runs to 448 residues: Putative sodium-coupled neutral amino acid transporter 11 (448 aa).

Residues 1–20 (MESERSCLLSSHDAGKGGSS) form a disordered region. Transmembrane regions (helical) follow at residues 22-42 (VSSA…IGLP), 52-72 (MGLL…ILLV), 94-114 (IGYI…MISY), 143-163 (FVIA…RDIA), 165-185 (LGKV…TVVV), 200-220 (AWVF…FALI), 246-266 (ISVG…YATF), 286-306 (TFGR…ECFV), 324-344 (SSHV…SLSY), 346-366 (CLGI…MFIF), and 389-409 (MILV…ALFP). N-linked (GlcNAc...) asparagine glycosylation is found at asparagine 425, asparagine 440, and asparagine 444.

Belongs to the amino acid/polyamine transporter 2 family.

The protein localises to the membrane. Functionally, putative sodium-dependent amino acid/proton antiporter. The polypeptide is Putative sodium-coupled neutral amino acid transporter 11 (slc38a11) (Danio rerio (Zebrafish)).